The primary structure comprises 291 residues: MLEGQIIKALSGFYYVFSEGKVYQCRARGNFRKRNISPLVGDDVEFQIENKTDGYILDVMSRENALVRPPVANIDIAILVFSAVEPDFSTNLADRFLVAIEKEDIKPVICISKMDLASESEKEQIAVYKDIYEAIGYDVFVTNDEPDKEAIKDYISGKTAVIAGQSGVGKSTLLNSLNSDLTLKTAEISNSLGRGKHTTRHVELMPIGDGFVADTPGFSSIEWDDLQPETLQFCFPEIEDRRSGCKYRGCMHENEPSCAVKTAVEANEIAEFRYKHYIQILQELKNRKPRY.

The region spanning 63–221 is the CP-type G domain; it reads ENALVRPPVA…VADTPGFSSI (159 aa). Residues 112-115 and 164-172 each bind GTP; these read SKMD and GQSGVGKST. 4 residues coordinate Zn(2+): Cys-245, Cys-250, His-252, and Cys-258.

The protein belongs to the TRAFAC class YlqF/YawG GTPase family. RsgA subfamily. As to quaternary structure, monomer. Associates with 30S ribosomal subunit, binds 16S rRNA. Zn(2+) serves as cofactor.

The protein localises to the cytoplasm. In terms of biological role, one of several proteins that assist in the late maturation steps of the functional core of the 30S ribosomal subunit. Helps release RbfA from mature subunits. May play a role in the assembly of ribosomal proteins into the subunit. Circularly permuted GTPase that catalyzes slow GTP hydrolysis, GTPase activity is stimulated by the 30S ribosomal subunit. The polypeptide is Small ribosomal subunit biogenesis GTPase RsgA 2 (Listeria monocytogenes serovar 1/2a (strain ATCC BAA-679 / EGD-e)).